A 380-amino-acid polypeptide reads, in one-letter code: Cytochrome b (380 aa).

4 helical membrane passes run 33-53, 77-98, 113-133, and 178-198; these read FGSL…FLAM, WLIR…FIHV, WNIG…GYVL, and FFAF…VHLL. Residues H83 and H97 each coordinate heme b. Residues H182 and H196 each coordinate heme b. A ubiquinone is bound at residue H201. 4 helical membrane passes run 226–246, 288–308, 320–340, and 347–367; these read IKDL…VLFF, LGGV…PLLN, ITQA…WIGG, and FTLI…IFMP.

The protein belongs to the cytochrome b family. As to quaternary structure, the cytochrome bc1 complex contains 11 subunits: 3 respiratory subunits (MT-CYB, CYC1 and UQCRFS1), 2 core proteins (UQCRC1 and UQCRC2) and 6 low-molecular weight proteins (UQCRH/QCR6, UQCRB/QCR7, UQCRQ/QCR8, UQCR10/QCR9, UQCR11/QCR10 and a cleavage product of UQCRFS1). This cytochrome bc1 complex then forms a dimer. Heme b is required as a cofactor.

Its subcellular location is the mitochondrion inner membrane. Its function is as follows. Component of the ubiquinol-cytochrome c reductase complex (complex III or cytochrome b-c1 complex) that is part of the mitochondrial respiratory chain. The b-c1 complex mediates electron transfer from ubiquinol to cytochrome c. Contributes to the generation of a proton gradient across the mitochondrial membrane that is then used for ATP synthesis. The sequence is that of Cytochrome b (MT-CYB) from Rhipidomys wetzeli (Wetzel's climbing mouse).